The primary structure comprises 402 residues: Putative epoxide hydrolase AFT8 (402 aa).

The protein belongs to the peptidase S33 family.

The protein operates within mycotoxin biosynthesis. Putative epoxide hydrolase; part of the gene clusters that mediate the biosynthesis of the host-selective toxins (HSTs) AF-toxins responsible for Alternaria black spot of strawberry disease by the strawberry pathotype. AF-toxin I and III are valine derivatives of 2,3-dyhydroxy-isovaleric acid and 2-hydroxy-isovaleric acid respectively, while AF II is an isoleucine derivative of 2-hydroxy-valeric acid. These derivatives are bound to a 9,10-epoxy-8-hydroxy-9-methyl-decatrienoic acid (EDA) moiety. On cellular level, AF-toxins affect plasma membrane of susceptible cells and cause a sudden increase in loss of K(+) after a few minutes of toxin treatment. The aldo-keto reductase AFTS1 catalyzes the conversion of 2-keto-isovaleric acid (2-KIV) to 2-hydroxy-isovaleric acid (2-HIV) by reduction of its ketone to an alcohol. The acyl-CoA ligase AFT1, the hydrolase AFT2 and the enoyl-CoA hydratases AFT3 and AFT6, but also the polyketide synthase AFT9, the acyl-CoA dehydrogenase AFT10, the cytochrome P450 monooxygenase AFT11 and the oxidoreductase AFT12 are all involved in the biosynthesis of the AK-, AF- and ACT-toxin common EDA structural moiety. The exact function of each enzyme, and of additional enzymes identified within the AF-toxin clusters have still to be determined. This is Putative epoxide hydrolase AFT8 from Alternaria alternata (Alternaria rot fungus).